Consider the following 65-residue polypeptide: SCOCO-like protein 1 (65 aa).

Positions 8-44 form a coiled coil; it reads RSLMEQKAMELQQQLQALLDEIDQNKQESENISRESE.

The protein belongs to the SLO1 family.

In Schizosaccharomyces pombe (strain 972 / ATCC 24843) (Fission yeast), this protein is SCOCO-like protein 1.